A 255-amino-acid chain; its full sequence is U2 small nuclear ribonucleoprotein A' (255 aa).

LRR repeat units lie at residues 20–41 (RDRE…GATL), 43–64 (QFDA…PLLR), 65–86 (RLKT…LDQA), and 89–110 (CLTE…DPLA). One can recognise an LRRCT domain in the interval 123-161 (NPVTNKKHYRLYVIYKVPQVRVLDFQKVKLKERQEAEKM). An N6-acetyllysine; alternate modification is found at lysine 172. A Glycyl lysine isopeptide (Lys-Gly) (interchain with G-Cter in SUMO2); alternate cross-link involves residue lysine 172. The segment at 174–201 (IARRSKTFNPGAGLPTDKKKGGPSPGDV) is disordered. A phosphoserine mark is found at serine 178 and serine 197. A Glycyl lysine isopeptide (Lys-Gly) (interchain with G-Cter in SUMO2) cross-link involves residue lysine 221. The tract at residues 222-255 (GLLQSGQIPGRERRSGPTDDGEEEMEEDTVTNGS) is disordered. A phosphoserine mark is found at serine 236 and serine 255. Positions 240 to 255 (DDGEEEMEEDTVTNGS) are enriched in acidic residues.

This sequence belongs to the U2 small nuclear ribonucleoprotein A family. Identified in the spliceosome B complex. Identified in the spliceosome C complex. Found in a pre-mRNA splicing complex with SFRS4, SFRS5, SNRNP70, SNRPA1, SRRM1 and SRRM2. Found in a pre-mRNA exonic splicing enhancer (ESE) complex with SNRNP70, SNRPA1, SRRM1 and TRA2B. Contributes to the binding of stem loop IV of U2 snRNA with SNRPB2.

Its subcellular location is the nucleus. Functionally, involved in pre-mRNA splicing as component of the spliceosome. Associated with sn-RNP U2, where it contributes to the binding of stem loop IV of U2 snRNA. The polypeptide is U2 small nuclear ribonucleoprotein A' (SNRPA1) (Homo sapiens (Human)).